The sequence spans 649 residues: Probable cyclic nucleotide-gated ion channel 12 (649 aa).

Over 1-43 (MNHRRSKFARIDSMGVDGKLKSVRGRLKKVYGKMKTLENWRKT) the chain is Cytoplasmic. The helical transmembrane segment at 44–64 (VLLACVVALAIDPLFLFIPLI) threads the bilayer. Residues 65-76 (DSQRFCFTFDKT) lie on the Extracellular side of the membrane. The chain crosses the membrane as a helical span at residues 77–97 (LVAVVCVIRTFIDTFYVIHII). The Cytoplasmic segment spans residues 98–128 (YYLITETIAPRSQASLRGEIVVHSKATLKTR). The helical transmembrane segment at 129 to 149 (LLFHFIVDIISVLPIPQVVVL) threads the bilayer. At 150–162 (TLIPLSASLVSER) the chain is on the extracellular side. The chain crosses the membrane as a helical span at residues 163–183 (ILKWIILSQYVPRIIRMYPLY). Over 184-200 (KEVTRAFGTVAESKWAG) the chain is Cytoplasmic. The chain crosses the membrane as a helical span at residues 201–221 (AALNLFLYMLHSYVFGAFWYL). Residues 222–329 (SSIERKSKCW…QNLETSNSAG (108 aa)) are Extracellular-facing. A helical membrane pass occupies residues 330-350 (EIFFAIIICVSGLLLFAVLIG). At 351 to 649 (NVQKYLQSST…ADLEFAKAEA (299 aa)) the chain is on the cytoplasmic side. A nucleoside 3',5'-cyclic phosphate contacts are provided by residues 436 to 559 (LNIM…TFRL) and E507. The tract at residues 545-560 (LNVFQRQKLQRTFRLY) is calmodulin-binding. Residues 565 to 594 (RSWAAFFIQAAWRKHCKRKLSKTRDNENIP) form the IQ domain. The interval 618-649 (RRKDTADCSSSPDMSPPVPHKPADLEFAKAEA) is disordered. The span at 638 to 649 (KPADLEFAKAEA) shows a compositional bias: basic and acidic residues.

Belongs to the cyclic nucleotide-gated cation channel (TC 1.A.1.5) family. Homotetramer or heterotetramer.

The protein resides in the cell membrane. Functionally, probable cyclic nucleotide-gated ion channel. In Arabidopsis thaliana (Mouse-ear cress), this protein is Probable cyclic nucleotide-gated ion channel 12 (CNGC12).